Reading from the N-terminus, the 464-residue chain is Glutamate--tRNA ligase 1 (464 aa).

Residues 10–20 (PSPTGYLHIGG) carry the 'HIGH' region motif. The short motif at 238-242 (KLSKR) is the 'KMSKS' region element. Lys-241 contributes to the ATP binding site.

It belongs to the class-I aminoacyl-tRNA synthetase family. Glutamate--tRNA ligase type 1 subfamily. As to quaternary structure, monomer.

It localises to the cytoplasm. The enzyme catalyses tRNA(Glu) + L-glutamate + ATP = L-glutamyl-tRNA(Glu) + AMP + diphosphate. Its function is as follows. Catalyzes the attachment of glutamate to tRNA(Glu) in a two-step reaction: glutamate is first activated by ATP to form Glu-AMP and then transferred to the acceptor end of tRNA(Glu). This is Glutamate--tRNA ligase 1 from Helicobacter hepaticus (strain ATCC 51449 / 3B1).